The primary structure comprises 132 residues: Large ribosomal subunit protein uL24 (132 aa).

It belongs to the universal ribosomal protein uL24 family. As to quaternary structure, part of the 50S ribosomal subunit.

In terms of biological role, one of two assembly initiator proteins, it binds directly to the 5'-end of the 23S rRNA, where it nucleates assembly of the 50S subunit. Functionally, one of the proteins that surrounds the polypeptide exit tunnel on the outside of the subunit. The chain is Large ribosomal subunit protein uL24 from Synechococcus sp. (strain JA-3-3Ab) (Cyanobacteria bacterium Yellowstone A-Prime).